The primary structure comprises 773 residues: DNA gyrase subunit B (773 aa).

The Toprim domain maps to 416-530 (SEIFLVEGDS…QGHVFIAQAP (115 aa)). Mg(2+) contacts are provided by glutamate 422, aspartate 495, and aspartate 497.

This sequence belongs to the type II topoisomerase GyrB family. Heterotetramer, composed of two GyrA and two GyrB chains. In the heterotetramer, GyrA contains the active site tyrosine that forms a transient covalent intermediate with DNA, while GyrB binds cofactors and catalyzes ATP hydrolysis. Requires Mg(2+) as cofactor. The cofactor is Mn(2+). Ca(2+) serves as cofactor.

It is found in the cytoplasm. The catalysed reaction is ATP-dependent breakage, passage and rejoining of double-stranded DNA.. Functionally, a type II topoisomerase that negatively supercoils closed circular double-stranded (ds) DNA in an ATP-dependent manner to modulate DNA topology and maintain chromosomes in an underwound state. Negative supercoiling favors strand separation, and DNA replication, transcription, recombination and repair, all of which involve strand separation. Also able to catalyze the interconversion of other topological isomers of dsDNA rings, including catenanes and knotted rings. Type II topoisomerases break and join 2 DNA strands simultaneously in an ATP-dependent manner. The protein is DNA gyrase subunit B of Helicobacter pylori (strain J99 / ATCC 700824) (Campylobacter pylori J99).